Consider the following 249-residue polypeptide: Purine nucleoside phosphorylase ML0918 (249 aa).

Positions 72, 109, and 126 each coordinate Zn(2+).

Belongs to the purine nucleoside phosphorylase YfiH/LACC1 family. In terms of assembly, homodimer. Requires Cu(2+) as cofactor. It depends on Zn(2+) as a cofactor.

It catalyses the reaction adenosine + phosphate = alpha-D-ribose 1-phosphate + adenine. It carries out the reaction S-methyl-5'-thioadenosine + phosphate = 5-(methylsulfanyl)-alpha-D-ribose 1-phosphate + adenine. The enzyme catalyses inosine + phosphate = alpha-D-ribose 1-phosphate + hypoxanthine. The catalysed reaction is adenosine + H2O + H(+) = inosine + NH4(+). Functionally, purine nucleoside enzyme that catalyzes the phosphorolysis of adenosine and inosine nucleosides, yielding D-ribose 1-phosphate and the respective free bases, adenine and hypoxanthine. Also catalyzes the phosphorolysis of S-methyl-5'-thioadenosine into adenine and S-methyl-5-thio-alpha-D-ribose 1-phosphate. Also has adenosine deaminase activity. This is Purine nucleoside phosphorylase ML0918 from Mycobacterium leprae (strain TN).